The primary structure comprises 291 residues: Mitochondrial fission factor (291 aa).

The Cytoplasmic segment spans residues 1-271; the sequence is MAEISRIQYE…ENKERAKREM (271 aa). The residue at position 89 (Thr-89) is a Phosphothreonine. Residues 106–134 are disordered; it reads LERPLPTPQSEESRAVGRLKRERSMSENA. A phosphoserine mark is found at Ser-129, Ser-131, and Ser-146. Thr-149 carries the phosphothreonine modification. 4 positions are modified to phosphoserine: Ser-151, Ser-178, Ser-182, and Ser-244. A coiled-coil region spans residues 240-271; the sequence is VDAASLRRQIIKLNRRLQLLEEENKERAKREM. A helical; Anchor for type IV membrane protein membrane pass occupies residues 272-289; the sequence is VMYSITVAFWLLNSWLWF. The Mitochondrial intermembrane portion of the chain corresponds to 290–291; sequence RR.

Belongs to the Tango11 family. Homodimer. Interacts with DNM1L. Interacts with C11orf65/MFI; the interaction inhibits MFF interaction with DNM1L.

It is found in the mitochondrion outer membrane. The protein localises to the peroxisome. It localises to the cytoplasmic vesicle. Its subcellular location is the secretory vesicle. The protein resides in the synaptic vesicle. Plays a role in mitochondrial and peroxisomal fission. Promotes the recruitment and association of the fission mediator dynamin-related protein 1 (DNM1L) to the mitochondrial surface. May be involved in regulation of synaptic vesicle membrane dynamics by recruitment of DNM1L to clathrin-containing vesicles. The protein is Mitochondrial fission factor (Mff) of Mus musculus (Mouse).